The chain runs to 121 residues: Large ribosomal subunit protein uL18 (121 aa).

This sequence belongs to the universal ribosomal protein uL18 family. Part of the 50S ribosomal subunit; part of the 5S rRNA/L5/L18/L25 subcomplex. Contacts the 5S and 23S rRNAs.

In terms of biological role, this is one of the proteins that bind and probably mediate the attachment of the 5S RNA into the large ribosomal subunit, where it forms part of the central protuberance. The sequence is that of Large ribosomal subunit protein uL18 from Thermoanaerobacter pseudethanolicus (strain ATCC 33223 / 39E) (Clostridium thermohydrosulfuricum).